Here is a 716-residue protein sequence, read N- to C-terminus: 1,4-alpha-glucan branching enzyme GlgB (716 aa).

Catalysis depends on Asp398, which acts as the Nucleophile. Glu451 functions as the Proton donor in the catalytic mechanism.

It belongs to the glycosyl hydrolase 13 family. GlgB subfamily. In terms of assembly, monomer.

It carries out the reaction Transfers a segment of a (1-&gt;4)-alpha-D-glucan chain to a primary hydroxy group in a similar glucan chain.. It functions in the pathway glycan biosynthesis; glycogen biosynthesis. In terms of biological role, catalyzes the formation of the alpha-1,6-glucosidic linkages in glycogen by scission of a 1,4-alpha-linked oligosaccharide from growing alpha-1,4-glucan chains and the subsequent attachment of the oligosaccharide to the alpha-1,6 position. The polypeptide is 1,4-alpha-glucan branching enzyme GlgB (Nitrobacter winogradskyi (strain ATCC 25391 / DSM 10237 / CIP 104748 / NCIMB 11846 / Nb-255)).